A 65-amino-acid polypeptide reads, in one-letter code: Beta-toxin Am IT (65 aa).

At glutamate 1 the chain carries Pyrrolidone carboxylic acid (Glu); partial. The 64-residue stretch at 1–64 (EHGYLLDKYT…LWNYKTNKCK (64 aa)) folds into the LCN-type CS-alpha/beta domain. Cystine bridges form between cysteine 12–cysteine 63, cysteine 16–cysteine 38, cysteine 23–cysteine 45, and cysteine 27–cysteine 47. Serine amide is present on serine 65.

The protein belongs to the long (4 C-C) scorpion toxin superfamily. Sodium channel inhibitor family. Expressed by the venom gland.

The protein resides in the secreted. Its function is as follows. Has a toxic effect on insects and mammals. On German cockroach larvae, it provokes contraction, paralysis and lethality. Intracerebroventricular injection into mice causes severe neurotoxic symptoms. It fully competes with the binding of the iodinated Css4 (AC P60266) on rat brain synaptosomes, with moderate affinity and in a concentration-dependent manner (EC(50)=25 nM). It may act on both site 3 and site 4 of voltage-gated sodium channels. The sequence is that of Beta-toxin Am IT from Androctonus mauritanicus mauritanicus (Scorpion).